Consider the following 453-residue polypeptide: tRNA modification GTPase MnmE (453 aa).

(6S)-5-formyl-5,6,7,8-tetrahydrofolate contacts are provided by R22, E79, and K119. In terms of domain architecture, TrmE-type G spans 215–376; the sequence is GMKVVIAGRP…LQQHLKSLMG (162 aa). Position 225 (N225) interacts with K(+). Residues 225–230, 244–250, 269–272, and 334–337 each bind GTP; these read NAGKSS, TEIAGTT, DTAG, and NKAD. S229 is a Mg(2+) binding site. T244, I246, and T249 together coordinate K(+). Mg(2+) is bound at residue T250. (6S)-5-formyl-5,6,7,8-tetrahydrofolate is bound at residue K453.

It belongs to the TRAFAC class TrmE-Era-EngA-EngB-Septin-like GTPase superfamily. TrmE GTPase family. In terms of assembly, homodimer. Heterotetramer of two MnmE and two MnmG subunits. It depends on K(+) as a cofactor.

Its subcellular location is the cytoplasm. Functionally, exhibits a very high intrinsic GTPase hydrolysis rate. Involved in the addition of a carboxymethylaminomethyl (cmnm) group at the wobble position (U34) of certain tRNAs, forming tRNA-cmnm(5)s(2)U34. In Shewanella woodyi (strain ATCC 51908 / MS32), this protein is tRNA modification GTPase MnmE.